The sequence spans 307 residues: MSFPDITPDLKAAMPALRGRLLANESLAPLTWFRVGGPAQVLFTPADADDLAYFLKHLPAELPVYVIGVGSNMIVRDGGVPGVVIRLAPRAFGEVKAEGDIITAGTAARDKRVAEVAASADLAGLEFLFGIPGTIGGALRMNAGANGGETKDILVEATAIDRRGETHRLSNADMKFTYRASGTDAALIFTAVRFRGTPSEPAAIRARMAEVQAHRETAQPIREKTGGSTFKNPPGHSAWKLVDAAGCRGLKVGGAQVSEMHCNFLINTGNATADDIETLGETVRERVKASSGIELQWEIKRIGVKAS.

Positions 34–199 (RVGGPAQVLF…TAVRFRGTPS (166 aa)) constitute an FAD-binding PCMH-type domain. The active site involves Arg179. The active-site Proton donor is Ser228. Residue Glu298 is part of the active site.

It belongs to the MurB family. FAD serves as cofactor.

The protein resides in the cytoplasm. The catalysed reaction is UDP-N-acetyl-alpha-D-muramate + NADP(+) = UDP-N-acetyl-3-O-(1-carboxyvinyl)-alpha-D-glucosamine + NADPH + H(+). Its pathway is cell wall biogenesis; peptidoglycan biosynthesis. Cell wall formation. In Bradyrhizobium sp. (strain ORS 278), this protein is UDP-N-acetylenolpyruvoylglucosamine reductase.